The primary structure comprises 367 residues: DNA replication and repair protein RecF (367 aa).

30–37 (GANGSGKT) lines the ATP pocket.

The protein belongs to the RecF family.

It localises to the cytoplasm. The RecF protein is involved in DNA metabolism; it is required for DNA replication and normal SOS inducibility. RecF binds preferentially to single-stranded, linear DNA. It also seems to bind ATP. This chain is DNA replication and repair protein RecF, found in Pseudomonas syringae pv. syringae (strain B728a).